We begin with the raw amino-acid sequence, 498 residues long: AP2-like ethylene-responsive transcription factor AIL7 (498 aa).

A compositionally biased stretch (polar residues) spans 186–195; the sequence is TSDQPLSCNN. The disordered stretch occupies residues 186-220; the sequence is TSDQPLSCNNGERGGNSNKKKTVSKKETSDDSKKK. Positions 209–220 are enriched in basic and acidic residues; it reads SKKETSDDSKKK. 2 consecutive DNA-binding regions (AP2/ERF) follow at residues 231-297 and 333-391; these read IYRG…TNFP and IYRG…TNFE. Over residues 422–451 the composition is skewed to low complexity; the sequence is ESPSSSSSDHNLQQQQLLPSSSPSDQNPNS. Residues 422–452 are disordered; it reads ESPSSSSSDHNLQQQQLLPSSSPSDQNPNSI.

Belongs to the AP2/ERF transcription factor family. AP2 subfamily. Interacts with HDG2, and possibly with HDG3, HDG7, ANL2, ATML1 and PDF2. In terms of tissue distribution, expressed in roots, seedlings, inflorescence, and siliques. Also detected at low levels in leaves.

It localises to the nucleus. Its function is as follows. Probably acts as a transcriptional activator. Binds to the GCC-box pathogenesis-related promoter element. May be involved in the regulation of gene expression by stress factors and by components of stress signal transduction pathways. This is AP2-like ethylene-responsive transcription factor AIL7 from Arabidopsis thaliana (Mouse-ear cress).